The sequence spans 459 residues: ATP synthase subunit beta (459 aa).

ATP is bound at residue 147–154 (GGAGVGKT).

It belongs to the ATPase alpha/beta chains family. F-type ATPases have 2 components, CF(1) - the catalytic core - and CF(0) - the membrane proton channel. CF(1) has five subunits: alpha(3), beta(3), gamma(1), delta(1), epsilon(1). CF(0) has three main subunits: a(1), b(2) and c(9-12). The alpha and beta chains form an alternating ring which encloses part of the gamma chain. CF(1) is attached to CF(0) by a central stalk formed by the gamma and epsilon chains, while a peripheral stalk is formed by the delta and b chains.

It localises to the cell inner membrane. It carries out the reaction ATP + H2O + 4 H(+)(in) = ADP + phosphate + 5 H(+)(out). In terms of biological role, produces ATP from ADP in the presence of a proton gradient across the membrane. The catalytic sites are hosted primarily by the beta subunits. The chain is ATP synthase subunit beta from Hydrogenovibrio crunogenus (strain DSM 25203 / XCL-2) (Thiomicrospira crunogena).